We begin with the raw amino-acid sequence, 254 residues long: Receptor expression-enhancing protein 3 (254 aa).

The next 3 helical transmembrane spans lie at Met-1–Tyr-21, Tyr-35–Ala-55, and Leu-59–Pro-79. Positions Asp-162 to Lys-232 are disordered. Residues Glu-198–Glu-212 show a composition bias toward acidic residues. Thr-200 carries the post-translational modification Phosphothreonine. Phosphoserine is present on Ser-209.

This sequence belongs to the DP1 family.

Its subcellular location is the endoplasmic reticulum membrane. In terms of biological role, microtubule-binding protein required to ensure proper cell division and nuclear envelope reassembly by sequestering the endoplasmic reticulum away from chromosomes during mitosis. Probably acts by clearing the endoplasmic reticulum membrane from metaphase chromosomes. The protein is Receptor expression-enhancing protein 3 (Reep3) of Mus musculus (Mouse).